A 243-amino-acid chain; its full sequence is 4-hydroxy-tetrahydrodipicolinate reductase (243 aa).

NAD(+) contacts are provided by residues Gly-9 to Met-14, Gly-78 to Ser-80, and Ala-104 to Phe-107. The Proton donor/acceptor role is filled by His-134. His-135 provides a ligand contact to (S)-2,3,4,5-tetrahydrodipicolinate. Catalysis depends on Lys-138, which acts as the Proton donor. Gly-144–Thr-145 is a (S)-2,3,4,5-tetrahydrodipicolinate binding site.

It belongs to the DapB family.

The protein resides in the cytoplasm. The catalysed reaction is (S)-2,3,4,5-tetrahydrodipicolinate + NAD(+) + H2O = (2S,4S)-4-hydroxy-2,3,4,5-tetrahydrodipicolinate + NADH + H(+). The enzyme catalyses (S)-2,3,4,5-tetrahydrodipicolinate + NADP(+) + H2O = (2S,4S)-4-hydroxy-2,3,4,5-tetrahydrodipicolinate + NADPH + H(+). It participates in amino-acid biosynthesis; L-lysine biosynthesis via DAP pathway; (S)-tetrahydrodipicolinate from L-aspartate: step 4/4. Its function is as follows. Catalyzes the conversion of 4-hydroxy-tetrahydrodipicolinate (HTPA) to tetrahydrodipicolinate. The chain is 4-hydroxy-tetrahydrodipicolinate reductase from Legionella pneumophila subsp. pneumophila (strain Philadelphia 1 / ATCC 33152 / DSM 7513).